Here is a 189-residue protein sequence, read N- to C-terminus: MVVGLLGGSFDPPHPGHVHITREALKRFGLDRVWWLVSPGNPLKPRPPAPLARRLAEARRLMRHPRVAVTGLEAEIGTRFTAETLAVLQRRYPGVRFVWLMGADNLAQFHRWERWRAIMESVPVGVLARPGAGLRARTSPAARRYASALLPEAEAARLGRSAAPAWCFVNLPMMDLSSTEIRATGRWRG.

The protein belongs to the NadD family.

It carries out the reaction nicotinate beta-D-ribonucleotide + ATP + H(+) = deamido-NAD(+) + diphosphate. Its pathway is cofactor biosynthesis; NAD(+) biosynthesis; deamido-NAD(+) from nicotinate D-ribonucleotide: step 1/1. Its function is as follows. Catalyzes the reversible adenylation of nicotinate mononucleotide (NaMN) to nicotinic acid adenine dinucleotide (NaAD). This Cereibacter sphaeroides (strain ATCC 17023 / DSM 158 / JCM 6121 / CCUG 31486 / LMG 2827 / NBRC 12203 / NCIMB 8253 / ATH 2.4.1.) (Rhodobacter sphaeroides) protein is Probable nicotinate-nucleotide adenylyltransferase.